The primary structure comprises 21 residues: Nitrilase (21 aa).

It belongs to the carbon-nitrogen hydrolase superfamily. Nitrilase family.

The catalysed reaction is a nitrile + 2 H2O = a carboxylate + NH4(+). Functionally, acts on many kinds of nitrile compounds such as aliphatic, aromatic, and heterocyclic mononitriles or dinitriles. Prefers S-(-)-2-(4'-isobutylphenyl)-propionitrile to R-(+)-2-(4'-isobutylphenyl)-propionitrile as the substrate. The protein is Nitrilase of Acinetobacter sp. (strain AK226).